Consider the following 364-residue polypeptide: Protein RecA (364 aa).

77–84 (GPESSGKT) contributes to the ATP binding site. Residues 343–364 (DRFLQNGGPDPDDGDGDATAEM) form a disordered region. Residues 352–364 (DPDDGDGDATAEM) are compositionally biased toward acidic residues.

The protein belongs to the RecA family.

The protein resides in the cytoplasm. Can catalyze the hydrolysis of ATP in the presence of single-stranded DNA, the ATP-dependent uptake of single-stranded DNA by duplex DNA, and the ATP-dependent hybridization of homologous single-stranded DNAs. It interacts with LexA causing its activation and leading to its autocatalytic cleavage. The chain is Protein RecA from Rhizobium johnstonii (strain DSM 114642 / LMG 32736 / 3841) (Rhizobium leguminosarum bv. viciae).